Consider the following 265-residue polypeptide: Urease accessory protein UreH (265 aa).

Belongs to the UreD family. As to quaternary structure, ureH, UreF and UreG form a complex that acts as a GTP-hydrolysis-dependent molecular chaperone, activating the urease apoprotein by helping to assemble the nickel containing metallocenter of UreC. The UreE protein probably delivers the nickel.

The protein resides in the cytoplasm. Its function is as follows. Required for maturation of urease via the functional incorporation of the urease nickel metallocenter. The chain is Urease accessory protein UreH from Helicobacter pylori (strain P12).